The sequence spans 559 residues: Leucine-rich repeat-containing protein 71 (559 aa).

Positions 1-18 (MSSEQSAPGASPRAPRPG) are enriched in low complexity. The segment at 1 to 56 (MSSEQSAPGASPRAPRPGTQKSSGAVTKKGERAAKEKPATVLPPVGEEEPKSPEEY) is disordered. Positions 28–38 (KKGERAAKEKP) are enriched in basic and acidic residues. LRR repeat units follow at residues 172–193 (NLWK…LPLC), 196–216 (TLRK…HKLM), 221–241 (TIAH…QLLG), 253–266 (TLVS…HIGD), and 281–302 (SLLW…KLAE). Composition is skewed to basic and acidic residues over residues 324–348 (KGTQ…REKS) and 380–391 (KSWELAKKEEKL). The disordered stretch occupies residues 324–427 (KGTQERSRSP…PEQKPSRAKG (104 aa)).

The protein is Leucine-rich repeat-containing protein 71 (LRRC71) of Homo sapiens (Human).